The sequence spans 61 residues: Short neurotoxin 1 (61 aa).

Disulfide bonds link C3–C23, C17–C40, C42–C53, and C54–C59.

This sequence belongs to the three-finger toxin family. Short-chain subfamily. Type I alpha-neurotoxin sub-subfamily. In terms of tissue distribution, expressed by the venom gland.

It is found in the secreted. Its function is as follows. Binds with high affinity to muscular nicotinic acetylcholine receptors (nAChRs) (tested on Torpedo marmorata AChR, Kd=0.07 nM) and with low affinity to neuronal alpha-7/CHRNA7 nAChRs (tested on chimeric receptor, Kd=3 uM) and inhibit acetylcholine from binding to the receptor, thereby impairing neuromuscular transmission. Produces peripheral paralysis by blocking neuromuscular transmission at the postsynaptic site. This chain is Short neurotoxin 1, found in Naja pallida (Red spitting cobra).